Reading from the N-terminus, the 570-residue chain is Protein NDNF (570 aa).

The signal sequence occupies residues Met1–Ser19. 2 consecutive Fibronectin type-III domains span residues Asn261–Phe333 and Pro447–Thr566. N-linked (GlcNAc...) asparagine glycosylation occurs at Asn324.

It is found in the secreted. In terms of biological role, secretory protein that plays a role in various cellular processes. Acts as a chemorepellent acting on gonadotropin-releasing hormone (GnRH) expressing neurons regulating their migration to the hypothalamus. Also promotes neuron migration, growth and survival as well as neurite outgrowth and is involved in the development of the olfactory system. May also act through the regulation of growth factors activity and downstream signaling. Also regulates extracellular matrix assembly and cell adhesiveness. Promotes endothelial cell survival, vessel formation and plays an important role in the process of revascularization through NOS3-dependent mechanisms. The protein is Protein NDNF (ndnf) of Xenopus tropicalis (Western clawed frog).